The sequence spans 138 residues: MQAHNLVYFSSVSENTHRFVQKLGVPAMRIPLHSRIEVSDPYVLVLPTYGGGRTAPDLQAGGYVPKQVIAFLNNEYNRALICGVVAAGNTNFGAEFCYAGDVVARKCGVPYLYRFELMGTEDDVTAVRAGLANLWKEH.

This sequence belongs to the NrdI family.

In terms of biological role, probably involved in ribonucleotide reductase function. This is Protein NrdI from Mycobacterium leprae (strain TN).